Consider the following 156-residue polypeptide: Small ribosomal subunit protein uS7 (156 aa).

Belongs to the universal ribosomal protein uS7 family. In terms of assembly, part of the 30S ribosomal subunit. Contacts proteins S9 and S11.

Its function is as follows. One of the primary rRNA binding proteins, it binds directly to 16S rRNA where it nucleates assembly of the head domain of the 30S subunit. Is located at the subunit interface close to the decoding center, probably blocks exit of the E-site tRNA. The protein is Small ribosomal subunit protein uS7 of Mycobacterium leprae (strain TN).